A 332-amino-acid chain; its full sequence is Monoterpene synthase 25 (332 aa).

Residues Asp-115, Glu-180, Asn-240, Ser-244, and Glu-248 each contribute to the Mg(2+) site. The DDXXXXD motif motif lies at Asp-115–Asp-121. An NSE/DTE motif motif is present at residues Asn-240–Glu-248.

Belongs to the trichodiene synthase family. Mg(2+) is required as a cofactor.

Its function is as follows. Terpene cyclase that catalyzes the cyclization of geranyl diphosphate (GPP) to myrcene and linalool. The chain is Monoterpene synthase 25 from Postia placenta (strain ATCC 44394 / Madison 698-R) (Brown rot fungus).